Here is a 480-residue protein sequence, read N- to C-terminus: Gamma-aminobutyric acid receptor subunit rho-1 (480 aa).

Positions 1–21 (MLAVRNMKFGIFLLWWGWVLA) are cleaved as a signal peptide. The Extracellular segment spans residues 22–281 (AESTVHWPGR…LYINFTLRRH (260 aa)). A disordered region spans residues 31–67 (REVHEPSKKGSRPQRQRRGAHDDAHKQGSPILKRSSD). The span at 39–48 (KGSRPQRQRR) shows a compositional bias: basic residues. 4-aminobutanoate is bound at residue Arg-126. A glycan (N-linked (GlcNAc...) asparagine) is linked at Asn-141. 4-aminobutanoate is bound at residue Ser-190. Cys-199 and Cys-213 form a disulfide bridge. Glu-218 is a 4-aminobutanoate binding site. Asn-235 and Asn-275 each carry an N-linked (GlcNAc...) asparagine glycan. Residues 282 to 302 (IFFFLLQTYFPATLMVMLSWV) traverse the membrane as a helical segment. Over 303–314 (SFWIDRRAVPAR) the chain is Cytoplasmic. A helical transmembrane segment spans residues 315–335 (VPLGITTVLTMSTIITGVNAS). The Extracellular portion of the chain corresponds to 336 to 346 (MPRVSYIKAVD). A helical membrane pass occupies residues 347–367 (IYLWVSFVFVFLSVLEYAAVN). Residues 368–458 (YLTTVQERKE…MRINTHAIDK (91 aa)) lie on the Cytoplasmic side of the membrane. Residues 459-479 (YSRIIFPAAYILFNLIYWSIF) form a helical membrane-spanning segment. Position 480 (Ser-480) is a topological domain, extracellular.

This sequence belongs to the ligand-gated ion channel (TC 1.A.9) family. Gamma-aminobutyric acid receptor (TC 1.A.9.5) subfamily. GABRR1 sub-subfamily. Three rho subunits (rho-1/GBRR1, rho-2/GBRR2 and rho-3/GBRR3) coassemble either to form functional homopentamers or heteropentamers. Rho-1/GBRR1 subunits can also associate with alpha-1/GBRA1 subunits to form a functional GABAAR. Interacts with SQSTM1.

It localises to the postsynaptic cell membrane. The protein localises to the cell membrane. It carries out the reaction chloride(in) = chloride(out). With respect to regulation, inhibited by TPMPA, a rho-specific antagonist. Inhibited by picrotoxin, when forming a homopentamer. In contrast with other GABAARs, rho-1 GABAAR is not inhibited by bicuculline, when forming a homopentamer. Down-regulated by external protons when forming a homopentamer. Functionally, rho subunit of the pentameric ligand-gated chloride channels responsible for mediating the effects of gamma-aminobutyric acid (GABA), the major inhibitory neurotransmitter in the brain. Rho-containing GABA-gated chloride channels are a subclass of GABA(A) receptors (GABAARs) entirely composed of rho subunits, where GABA molecules bind at the rho intersubunit interfaces. When activated by GABA, rho-GABAARs selectively allow the flow of chloride anions across the cell membrane down their electrochemical gradient. Rho-1 subunits are primarily expressed in retina where rho-1-containing GABAARs may play a role in retinal neurotransmission. Rho-1 GABAARs are also involved in neuronal tonic (extrasynaptic) and phasic (synaptic) transmission in the Purkinje neurons of the cerebellum. Rho-1 GABAARs may also contribute to the regulation of glial development in the cerebellum by controlling extrasynaptic transmission. The chain is Gamma-aminobutyric acid receptor subunit rho-1 from Rattus norvegicus (Rat).